A 271-amino-acid polypeptide reads, in one-letter code: MLVVEGLTCRFGTKAAVDDASFAVAPGGFVGVIGRSGAGKSTLLRMINRLAEPTAGRILFEGQDVTALRGRELRQWRARSAMIFQQFNLVGRLDVLTNVLMGRLAEMPPWRSLVQAWPERDRALAMSALEQFDMGGVAAQRADSLSGGQQQRVAIARALVQQPDIILADEPIASLDPRNTRIVMDALLRINKHFGITVLCNLHSLDLARTYCDRLIGMSSGRIVFDGAPASLTENIARELYDLEANEVMGAASAPQPAGRMLPALGTAAAA.

In terms of domain architecture, ABC transporter spans 2-245 (LVVEGLTCRF…IARELYDLEA (244 aa)). 34 to 41 (GRSGAGKS) is an ATP binding site.

Belongs to the ABC transporter superfamily. Phosphonates importer (TC 3.A.1.9.1) family. As to quaternary structure, the complex is composed of two ATP-binding proteins (PhnC), two transmembrane proteins (PhnE) and a solute-binding protein (PhnD).

It is found in the cell inner membrane. The enzyme catalyses phosphonate(out) + ATP + H2O = phosphonate(in) + ADP + phosphate + H(+). Part of the ABC transporter complex PhnCDE involved in phosphonates import. Responsible for energy coupling to the transport system. The sequence is that of Phosphonates import ATP-binding protein PhnC 2 from Rhodopseudomonas palustris (strain BisB18).